We begin with the raw amino-acid sequence, 238 residues long: Ribitol-5-phosphate cytidylyltransferase 1 (238 aa).

CTP is bound by residues 7-10 (LAGG) and 81-87 (GSDRNDT).

Belongs to the IspD/TarI cytidylyltransferase family. TarI subfamily.

The enzyme catalyses D-ribitol 5-phosphate + CTP + H(+) = CDP-L-ribitol + diphosphate. The protein operates within cell wall biogenesis; poly(ribitol phosphate) teichoic acid biosynthesis. Its function is as follows. Catalyzes the transfer of the cytidylyl group of CTP to D-ribitol 5-phosphate. This is Ribitol-5-phosphate cytidylyltransferase 1 from Staphylococcus aureus (strain bovine RF122 / ET3-1).